The following is a 450-amino-acid chain: 5-amino-6-(D-ribitylamino)uracil--L-tyrosine 4-hydroxyphenyl transferase (450 aa).

The segment at 1-24 (MPDVPETVGTPDGSTEFEHRPTTD) is disordered. Positions 82 to 350 (VTFVANLNNN…MIAVSRLFLD (269 aa)) constitute a Radical SAM core domain. [4Fe-4S] cluster contacts are provided by Cys-96, Cys-100, and Cys-103. The interval 430–450 (PDADVLGPQLGPRADGTPLLD) is disordered.

It belongs to the radical SAM superfamily. CofH family. In terms of assembly, consists of two subunits, CofG and CofH. [4Fe-4S] cluster serves as cofactor.

It carries out the reaction 5-amino-6-(D-ribitylamino)uracil + L-tyrosine + S-adenosyl-L-methionine = 5-amino-5-(4-hydroxybenzyl)-6-(D-ribitylimino)-5,6-dihydrouracil + 2-iminoacetate + 5'-deoxyadenosine + L-methionine + H(+). Its pathway is cofactor biosynthesis; coenzyme F0 biosynthesis. Catalyzes the radical-mediated synthesis of 5-amino-5-(4-hydroxybenzyl)-6-(D-ribitylimino)-5,6-dihydrouracil from 5-amino-6-(D-ribitylamino)uracil and L-tyrosine. The protein is 5-amino-6-(D-ribitylamino)uracil--L-tyrosine 4-hydroxyphenyl transferase of Haloarcula marismortui (strain ATCC 43049 / DSM 3752 / JCM 8966 / VKM B-1809) (Halobacterium marismortui).